The primary structure comprises 452 residues: MREIVHIQTGQCGNQIGTKFWEIISDEHGIQPTGEYTTGVEKDLMELQLERINVYYNEGNQGKYVPRAVLVDLEPGTMDSVRAGPHGQLFKPDSFVFGQSGAGNNWAKGHYTEGAELVDSVLDVVRKKSEKCDCLQGFQLTHSLGGVTGSGMGTLLVSKILEEFPDRIMVTFSVVPSPKVSDTVVEPYNATLSIHQLVENTDETYCIDNEALYDICFRTLKLQNPTYGDLNHLVSLTMSGVTTCLRFPGQLNADLRKLAVNMVPFPRLHFFMPGFAPLTARGSQQYRALTVPELTQQMFDAKNMMAACDPRHGRYLTVAAIFRGRMSMREVDDQMYNIQNKNSSFFVEWIPNNVKTAVCDIPPRGLKMSATFIGNSTAIQELFKRVSEQFTAMFRRKAFLHWYTGEGMDEMEFTEAESNMNDLVSEYQQYQEATADDEAEFEEEGEVEGEYD.

Glutamine 11, glutamate 74, serine 143, valine 147, threonine 148, glycine 149, asparagine 209, and asparagine 231 together coordinate GTP. Glutamate 74 is a binding site for Mg(2+). The tract at residues 431–452 is disordered; it reads QEATADDEAEFEEEGEVEGEYD. Over residues 434–452 the composition is skewed to acidic residues; the sequence is TADDEAEFEEEGEVEGEYD.

This sequence belongs to the tubulin family. As to quaternary structure, dimer of alpha and beta chains. A typical microtubule is a hollow water-filled tube with an outer diameter of 25 nm and an inner diameter of 15 nM. Alpha-beta heterodimers associate head-to-tail to form protofilaments running lengthwise along the microtubule wall with the beta-tubulin subunit facing the microtubule plus end conferring a structural polarity. Microtubules usually have 13 protofilaments but different protofilament numbers can be found in some organisms and specialized cells. Mg(2+) serves as cofactor.

The protein resides in the cytoplasm. It localises to the cytoskeleton. In terms of biological role, tubulin is the major constituent of microtubules, a cylinder consisting of laterally associated linear protofilaments composed of alpha- and beta-tubulin heterodimers. Microtubules grow by the addition of GTP-tubulin dimers to the microtubule end, where a stabilizing cap forms. Below the cap, tubulin dimers are in GDP-bound state, owing to GTPase activity of alpha-tubulin. This is Tubulin beta-2 chain from Homarus americanus (American lobster).